The following is a 209-amino-acid chain: 60S ribosomal subunit assembly/export protein loc-1 (209 aa).

Disordered regions lie at residues 1–53 (MAPT…SKGR) and 135–209 (REAR…AAPE). 2 stretches are compositionally biased toward basic and acidic residues: residues 20–33 (GSKD…DGVL) and 135–159 (REAR…TKDS). Residues 126-170 (IKARQMEEIREARRAEAEKKEAERKARLEETKDSLRKKRKRSKQS) adopt a coiled-coil conformation.

This sequence belongs to the LOC1 family. In terms of assembly, component of the 66S pre-ribosomal particle.

The protein localises to the nucleus. It localises to the nucleolus. Required for efficient assembly and nuclear export of the 60S ribosomal subunit. This is 60S ribosomal subunit assembly/export protein loc-1 (loc-1) from Neurospora crassa (strain ATCC 24698 / 74-OR23-1A / CBS 708.71 / DSM 1257 / FGSC 987).